A 183-amino-acid polypeptide reads, in one-letter code: Abscisic acid receptor PYL10 (183 aa).

The interval 20–172 (HELVESQCSS…NLNSLADVTE (153 aa)) is START-like. Cysteines 27 and 153 form a disulfide. Abscisate-binding positions include lysine 56, 85–90 (ATKSTE), 112–118 (RLKNYSS), and glutamate 137. Residues 81-85 (SGLPA) carry the Gate loop motif. A Latch loop motif is present at residues 111–113 (HRL).

It belongs to the PYR/PYL/RCAR abscisic acid intracellular receptor family. As to quaternary structure, monomer. Forms heterodimer with PYL13, thus antagonizing PP2Cs-binding and ABA-independent inhibition of PP2Cs. Homodimer. Binds ABA on one subunit only. Binds to CARs protein in an ABA-independent manner, both at the plasma membrane and in the nucleus. Interacts with ABI1 and HAB1, and possibly with other PP2Cs, in an ABA-independent manner.

The protein localises to the cytoplasm. The protein resides in the nucleus. Its subcellular location is the cell membrane. Receptor for abscisic acid (ABA) required for ABA-mediated responses such as stomatal closure and germination inhibition. Inhibits the activity of group-A protein phosphatases type 2C (PP2Cs) in an ABA-independent manner but more efficiently when activated by ABA. Can be activated by both (-)-ABA and (+)-ABA. The chain is Abscisic acid receptor PYL10 (PYL10) from Arabidopsis thaliana (Mouse-ear cress).